Here is a 708-residue protein sequence, read N- to C-terminus: Exocyst complex component 5 (708 aa).

Residue A2 is modified to N-acetylalanine. Positions 40 to 101 (KRLLEEFVNH…AFQHFQELDE (62 aa)) form a coiled coil. Phosphothreonine is present on residues T122, T395, and T405. S412 carries the phosphoserine modification.

The protein belongs to the SEC10 family. The exocyst complex is composed of EXOC1, EXOC2, EXOC3, EXOC4, EXOC5, EXOC6, EXOC7 and EXOC8. Interacts with EXOC3L1. Ubiquitous.

The protein resides in the cytoplasm. The protein localises to the midbody. Component of the exocyst complex involved in the docking of exocytic vesicles with fusion sites on the plasma membrane. This is Exocyst complex component 5 (EXOC5) from Homo sapiens (Human).